A 369-amino-acid polypeptide reads, in one-letter code: Naringenin,2-oxoglutarate 3-dioxygenase (369 aa).

A Fe2OG dioxygenase domain is found at 193 to 297 (CVDMDQKVVV…RLSIATFQNP (105 aa)). The Fe cation site is built by His220, Asp222, and His278. Position 288 (Arg288) interacts with 2-oxoglutarate.

Belongs to the iron/ascorbate-dependent oxidoreductase family. Requires Fe(2+) as cofactor. It depends on L-ascorbate as a cofactor.

The catalysed reaction is a (2S)-flavan-4-one + 2-oxoglutarate + O2 = a (2R,3R)-dihydroflavonol + succinate + CO2. The protein operates within secondary metabolite biosynthesis; flavonoid biosynthesis. In terms of biological role, catalyzes the 3-beta-hydroxylation of 2S-flavanones to 2R,3R-dihydroflavonols which are intermediates in the biosynthesis of flavonols, anthocyanidins, catechins and proanthocyanidins in plants. This is Naringenin,2-oxoglutarate 3-dioxygenase (AN3) from Petunia hybrida (Petunia).